Reading from the N-terminus, the 259-residue chain is Small ribosomal subunit protein uS2 (259 aa).

Belongs to the universal ribosomal protein uS2 family.

The protein is Small ribosomal subunit protein uS2 of Dinoroseobacter shibae (strain DSM 16493 / NCIMB 14021 / DFL 12).